A 253-amino-acid chain; its full sequence is UPF0246 protein Swit_4565 (253 aa).

This sequence belongs to the UPF0246 family.

The protein is UPF0246 protein Swit_4565 of Rhizorhabdus wittichii (strain DSM 6014 / CCUG 31198 / JCM 15750 / NBRC 105917 / EY 4224 / RW1) (Sphingomonas wittichii).